The chain runs to 276 residues: UPF0328 protein ECU08_2080 (276 aa).

The segment at M1–H24 is disordered.

It belongs to the UPF0328 family.

The sequence is that of UPF0328 protein ECU08_2080 from Encephalitozoon cuniculi (strain GB-M1) (Microsporidian parasite).